A 214-amino-acid chain; its full sequence is 7-cyano-7-deazaguanine synthase (214 aa).

10-20 lines the ATP pocket; sequence FSGGQDSTTCL. Residues Cys184, Cys193, Cys196, and Cys199 each coordinate Zn(2+).

It belongs to the QueC family. In terms of assembly, homodimer. Requires Zn(2+) as cofactor.

It catalyses the reaction 7-carboxy-7-deazaguanine + NH4(+) + ATP = 7-cyano-7-deazaguanine + ADP + phosphate + H2O + H(+). It functions in the pathway purine metabolism; 7-cyano-7-deazaguanine biosynthesis. Catalyzes the ATP-dependent conversion of 7-carboxy-7-deazaguanine (CDG) to 7-cyano-7-deazaguanine (preQ(0)). The sequence is that of 7-cyano-7-deazaguanine synthase from Exiguobacterium sp. (strain ATCC BAA-1283 / AT1b).